Here is a 220-residue protein sequence, read N- to C-terminus: Artemin (220 aa).

The signal sequence occupies residues 1-39; it reads MELGLGGLSTLSHCPWPRQQPALWPTLAALALLSSVAEA. The propeptide occupies 40–107; sequence SLGSAPRSPA…ALPRGGRAAR (68 aa). Residues 41–121 form a disordered region; sequence LGSAPRSPAP…GSRARAAGAR (81 aa). Composition is skewed to pro residues over residues 47–58 and 81–98; these read SPAPREGPPPVL and PPPQ…PPSA. The segment covering 99–121 has biased composition (low complexity); that stretch reads LPRGGRAARAGGPGSRARAAGAR. Disulfide bonds link Cys123–Cys188, Cys150–Cys216, and Cys154–Cys218. Asn202 is a glycosylation site (N-linked (GlcNAc...) asparagine).

The protein belongs to the TGF-beta family. GDNF subfamily. Homodimer; disulfide-linked. Interacts with GFRA3 coreceptor and RET: forms a 2:2:2 ternary complex composed of ARTN ligand, GFRA3 and RET receptor. Ubiquitous. Expressed at high levels in peripheral tissues including prostate, placenta, pancreas, heart, kidney, pituitary gland, lung and testis. Expressed at low levels in the brain.

It localises to the secreted. In terms of biological role, growth factor that supports the survival of sensory and sympathetic peripheral neurons in culture and also supports the survival of dopaminergic neurons of the ventral mid-brain. Acts by binding to its coreceptor, GFRA3, leading to autophosphorylation and activation of the RET receptor. Strong attractant of gut hematopoietic cells thus promoting the formation Peyer's patch-like structures, a major component of the gut-associated lymphoid tissue. The chain is Artemin from Homo sapiens (Human).